Reading from the N-terminus, the 158-residue chain is UPF0266 membrane protein YobD (158 aa).

3 consecutive transmembrane segments (helical) span residues 6 to 26 (LVLI…QFIM), 45 to 65 (IDSV…VTNH), and 67 to 87 (ALIT…IFWI).

Belongs to the UPF0266 family.

The protein localises to the cell inner membrane. This chain is UPF0266 membrane protein YobD, found in Shigella boydii serotype 4 (strain Sb227).